Here is a 451-residue protein sequence, read N- to C-terminus: MNLKLHIKTYGCQMNQYDSSKIVDLLKNTHKYQLTDIAEEADILLLNTCSIREKAQEKLFHQLGRWRRLKKINPNLIIGVGGCVASQEGSNIRERANYVDIIFGPQTLHRLPEMINHVRITRSPVIDISFPEIEKFDCMPKPQAKGPTAFVSIIEGCDKYCSYCVVPYTRGIEVSRPCEDILLEINNLADQNVREIHLLGQNVNAYRGTRYGGGTCTFAELLRLVAAINGIDRIRFTTSHPIEFTDDLIDVYRDTPELVSFVHLPVQSGSDRILALMKRGHTVLEYKSIIRKLYAVRPSIQISSDFIVGFPGETEEDFRQTMNLISEVNFDMSFSFIYSPRPGTPAANMVDIVSQDEKKQRLYILQECIRKQAMKFSQAMKGTVQCILVEGTSRKNIMHLSGRTENNRVVNFIGNNGMIGQFVNVEIIDVYSNSLRGELISNQEKKYTLSA.

An MTTase N-terminal domain is found at 3 to 120 (LKLHIKTYGC…LPEMINHVRI (118 aa)). [4Fe-4S] cluster contacts are provided by cysteine 12, cysteine 49, cysteine 83, cysteine 157, cysteine 161, and cysteine 164. The Radical SAM core domain occupies 143 to 375 (QAKGPTAFVS…QECIRKQAMK (233 aa)). In terms of domain architecture, TRAM spans 378-441 (QAMKGTVQCI…SNSLRGELIS (64 aa)).

This sequence belongs to the methylthiotransferase family. MiaB subfamily. As to quaternary structure, monomer. It depends on [4Fe-4S] cluster as a cofactor.

It is found in the cytoplasm. It carries out the reaction N(6)-dimethylallyladenosine(37) in tRNA + (sulfur carrier)-SH + AH2 + 2 S-adenosyl-L-methionine = 2-methylsulfanyl-N(6)-dimethylallyladenosine(37) in tRNA + (sulfur carrier)-H + 5'-deoxyadenosine + L-methionine + A + S-adenosyl-L-homocysteine + 2 H(+). In terms of biological role, catalyzes the methylthiolation of N6-(dimethylallyl)adenosine (i(6)A), leading to the formation of 2-methylthio-N6-(dimethylallyl)adenosine (ms(2)i(6)A) at position 37 in tRNAs that read codons beginning with uridine. This Baumannia cicadellinicola subsp. Homalodisca coagulata protein is tRNA-2-methylthio-N(6)-dimethylallyladenosine synthase.